Here is an 84-residue protein sequence, read N- to C-terminus: Small ribosomal subunit protein uS17 (84 aa).

This sequence belongs to the universal ribosomal protein uS17 family. As to quaternary structure, part of the 30S ribosomal subunit.

One of the primary rRNA binding proteins, it binds specifically to the 5'-end of 16S ribosomal RNA. The polypeptide is Small ribosomal subunit protein uS17 (Vibrio parahaemolyticus serotype O3:K6 (strain RIMD 2210633)).